A 950-amino-acid chain; its full sequence is Protocadherin alpha-3 (950 aa).

A signal peptide spans 1–29 (MLFSWREDPGAQCLLLSLLLLAASEVGSG). 6 consecutive Cadherin domains span residues 30–133 (QLHY…APVF), 134–242 (PMSV…APAF), 243–350 (ERTI…VPEL), 351–455 (VIHS…APAF), 456–565 (SQSE…APAL), and 581–678 (VPRS…APKA). The Extracellular segment spans residues 30-697 (QLHYSVSEEA…GPEAALVDVN (668 aa)). 2 N-linked (GlcNAc...) asparagine glycosylation sites follow: N257 and N265. N548 is a glycosylation site (N-linked (GlcNAc...) asparagine). A helical transmembrane segment spans residues 698–718 (VYLIVAICAVSSLLVLTLLLY). The Cytoplasmic segment spans residues 719 to 950 (TALRCSAPPT…GNSTTDNSDQ (232 aa)). PXXP repeat units lie at residues 734-737 (PGKP) and 774-777 (PSLP). Positions 734-894 (PGKPTLVCSS…PDKFIIPGSP (161 aa)) are 6 X 4 AA repeats of P-X-X-P. 3 disordered regions span residues 777 to 806 (PPCP…NPDW), 831 to 856 (GPGG…EVSP), and 869 to 889 (FKYG…DKFI). Over residues 782-797 (SRDREEKQDVDVDLSA) the composition is skewed to basic and acidic residues. 4 PXXP repeats span residues 799–802 (PRQP), 832–835 (PGGP), 873–876 (PGNP), and 891–894 (PGSP). The interval 901-950 (QEPANSQIDKSDFITFGKKEETKKKKKKKKGNKTQEKKEKGNSTTDNSDQ) is disordered. A compositionally biased stretch (basic and acidic residues) spans 909-923 (DKSDFITFGKKEETK).

It localises to the cell membrane. Potential calcium-dependent cell-adhesion protein. May be involved in the establishment and maintenance of specific neuronal connections in the brain. In Pan troglodytes (Chimpanzee), this protein is Protocadherin alpha-3 (PCDHA3).